Reading from the N-terminus, the 246-residue chain is Metallo-beta-lactamase IMP-1 (246 aa).

Positions 1–18 (MSKLSVFFIFLFCSIATA) are cleaved as a signal peptide. Histidine 95, histidine 97, aspartate 99, histidine 157, and cysteine 176 together coordinate Zn(2+). Positions 179 and 185 each coordinate a beta-lactam. Histidine 215 contributes to the Zn(2+) binding site.

Belongs to the metallo-beta-lactamase superfamily. Class-B beta-lactamase family. As to quaternary structure, monomer. The cofactor is Zn(2+).

The protein resides in the periplasm. It carries out the reaction a beta-lactam + H2O = a substituted beta-amino acid. Its activity is regulated as follows. Inhibited by captopril stereoisomers, Hg(2+), Fe(2+), Cu(2+), chelating agents such as EDTA, dansyl derivatives, including dansyl-C4SH, bisthiazolidines, mercaptoacetic acid and by PMPC phosphonates. Inhibited by 3-(3-mercaptopropionylsulfanyl)-propionic acid pentafluorophenyl ester, via a covalent binding to Lys-179. Not susceptible to inactivation by the beta-lactamase-blocking agents clavulanic acid or cloxacillin. In terms of biological role, class B beta-lactamase which confers resistance to the beta-lactam antibiotics, including penicillins, cephalosporins and carbapenems. Acts via hydrolysis of the beta-lactam ring. Has penicillin-, cephalosporin- and carbapenem-hydrolyzing activities. Has endoribonuclease activity, cleaving substrate RNAs preferentially between U/C and A, in vitro. This is Metallo-beta-lactamase IMP-1 from Serratia marcescens.